Reading from the N-terminus, the 420-residue chain is MTVRVLNVWWDGRIVGQFTQDRHGDIGFAYSEAWLDDENTLPLSASLPKRAEPFSRRECRPFFGGLLPEESQRLVTAQALGVSPANDFALLDRLGGDVAGALQLLPEDQEPIEAGPLPDQQPTPLDEAGIVRILDALPTRPLLAGQEGLRLSLAGAQSKVPLVLIDGELALPVSGQATTHILKPPIARFPGTTENEAFVMRLAAAIGLDVAPVEPRSANGRPFLVVERYDRYRDADGVVHRIHQEDFCQALGVPPETKYASEGGPTFKDCFELLRRVSARPATDVLKLLDAAIFNLVVGNADAHGKNFSILYDDQGPKMAPLYDLLSTVAYPDLSPKMAMRIGKRVTLAEMDADGWQTFAKEAGVGLPLVRRRITNLVDSTAEAVARVLEDTSDLYIDSARINHFADSVAGRAKLVRLSI.

The active-site Proton acceptor is the Asp302.

It belongs to the HipA Ser/Thr kinase family.

The polypeptide is Putative kinase Y4mE (Sinorhizobium fredii (strain NBRC 101917 / NGR234)).